The sequence spans 533 residues: Early growth response protein 1 (533 aa).

Disordered stretches follow at residues 1-94 (MAAA…EQPY) and 161-237 (MTNP…PPPA). Gly residues predominate over residues 68 to 77 (SGGGGGGGSN). Residues 164 to 189 (PPTSSSSAPSPAASSSSSASQSPPLS) show a composition bias toward low complexity. A Glycyl lysine isopeptide (Lys-Gly) (interchain with G-Cter in SUMO2) cross-link involves residue Lys-303. The segment at 316–336 (PSRMRKYPNRPSKTPPHERPY) is disordered. 3 consecutive C2H2-type zinc fingers follow at residues 336–360 (YACPVESCDRRFSRSDELTRHIRIH), 366–388 (FQCRICMRNFSRSDHLTTHIRTH), and 394–416 (FACDICGRKFARSDERKRHTKIH). Positions 407-478 (DERKRHTKIH…SSTYPSPAHS (72 aa)) are disordered. Positions 411–421 (RHTKIHLRQKD) are enriched in basic residues. A compositionally biased stretch (low complexity) spans 427–475 (SVVASPAASSLSSYPSPVATSYPSPATTSFPSPVPTSYSSPGSSTYPSP).

It belongs to the EGR C2H2-type zinc-finger protein family. In terms of assembly, interacts with SNAI1 and SP1 upon 12-O-tetradecanoylphorbol-13-acetate (TPA) induction. In terms of tissue distribution, detected in lung vasculature and in mononuclear phagocytes. Detected in liver (at protein level). Expressed in the liver in a circadian manner.

The protein localises to the nucleus. It localises to the cytoplasm. Its function is as follows. Transcriptional regulator. Recognizes and binds to the DNA sequence 5'-GCG(T/G)GGGCG-3'(EGR-site) in the promoter region of target genes. Binds double-stranded target DNA, irrespective of the cytosine methylation status. Regulates the transcription of numerous target genes, and thereby plays an important role in regulating the response to growth factors, DNA damage, and ischemia. Plays a role in the regulation of cell survival, proliferation and cell death. Activates expression of p53/TP53 and TGFB1, and thereby helps prevent tumor formation. Required for normal progress through mitosis and normal proliferation of hepatocytes after partial hepatectomy. Mediates responses to ischemia and hypoxia; regulates the expression of proteins such as IL1B and CXCL2 that are involved in inflammatory processes and development of tissue damage after ischemia. Regulates biosynthesis of luteinizing hormone (LHB) in the pituitary. Regulates the amplitude of the expression rhythms of clock genes: BMAL1, PER2 and NR1D1 in the liver via the activation of PER1 (clock repressor) transcription. Regulates the rhythmic expression of core-clock gene BMAL1 in the suprachiasmatic nucleus (SCN). The polypeptide is Early growth response protein 1 (Egr1) (Mus musculus (Mouse)).